We begin with the raw amino-acid sequence, 104 residues long: UPF0213 protein VIBHAR_05350 (104 aa).

The region spanning 7 to 82 is the GIY-YIG domain; that stretch reads QRWSVYLIRN…KQLTKTKKEL (76 aa).

Belongs to the UPF0213 family.

The polypeptide is UPF0213 protein VIBHAR_05350 (Vibrio campbellii (strain ATCC BAA-1116)).